The sequence spans 432 residues: D-amino acid dehydrogenase (432 aa).

Residue 3 to 17 (VVILGSGVVGVTSAW) coordinates FAD.

The protein belongs to the DadA oxidoreductase family. FAD serves as cofactor.

The protein resides in the cell inner membrane. It carries out the reaction a D-alpha-amino acid + A + H2O = a 2-oxocarboxylate + AH2 + NH4(+). It participates in amino-acid degradation; D-alanine degradation; NH(3) and pyruvate from D-alanine: step 1/1. In terms of biological role, oxidative deamination of D-amino acids. The sequence is that of D-amino acid dehydrogenase from Salmonella typhi.